The chain runs to 216 residues: Cytochrome c biogenesis ATP-binding export protein CcmA (216 aa).

Residues 11 to 216 (VSASKLTCIR…RKIRLDYRFV (206 aa)) form the ABC transporter domain. 43 to 50 (GPNGAGKT) lines the ATP pocket.

This sequence belongs to the ABC transporter superfamily. CcmA exporter (TC 3.A.1.107) family. In terms of assembly, the complex is composed of two ATP-binding proteins (CcmA) and two transmembrane proteins (CcmB).

The protein localises to the cell inner membrane. The catalysed reaction is heme b(in) + ATP + H2O = heme b(out) + ADP + phosphate + H(+). Part of the ABC transporter complex CcmAB involved in the biogenesis of c-type cytochromes; once thought to export heme, this seems not to be the case, but its exact role is uncertain. Responsible for energy coupling to the transport system. The chain is Cytochrome c biogenesis ATP-binding export protein CcmA from Shewanella sp. (strain MR-4).